A 156-amino-acid chain; its full sequence is SsrA-binding protein (156 aa).

Residues 134–156 form a disordered region; that stretch reads RQTLREQQDKRESLRELRERNRR.

Belongs to the SmpB family.

Its subcellular location is the cytoplasm. In terms of biological role, required for rescue of stalled ribosomes mediated by trans-translation. Binds to transfer-messenger RNA (tmRNA), required for stable association of tmRNA with ribosomes. tmRNA and SmpB together mimic tRNA shape, replacing the anticodon stem-loop with SmpB. tmRNA is encoded by the ssrA gene; the 2 termini fold to resemble tRNA(Ala) and it encodes a 'tag peptide', a short internal open reading frame. During trans-translation Ala-aminoacylated tmRNA acts like a tRNA, entering the A-site of stalled ribosomes, displacing the stalled mRNA. The ribosome then switches to translate the ORF on the tmRNA; the nascent peptide is terminated with the 'tag peptide' encoded by the tmRNA and targeted for degradation. The ribosome is freed to recommence translation, which seems to be the essential function of trans-translation. In Paenarthrobacter aurescens (strain TC1), this protein is SsrA-binding protein.